Reading from the N-terminus, the 32-residue chain is uncharacterized protein (32 aa).

This is an uncharacterized protein from Haemophilus influenzae (strain ATCC 51907 / DSM 11121 / KW20 / Rd).